An 82-amino-acid polypeptide reads, in one-letter code: Beta-insect depressant toxin LqqIT2 (82 aa).

The N-terminal stretch at 1–21 is a signal peptide; it reads MKLLLLLIVSASMLIESLVNA. In terms of domain architecture, LCN-type CS-alpha/beta spans 22–82; the sequence is DGYIRKRDGC…TWKSETNTCG (61 aa). Disulfide bonds link cysteine 31-cysteine 81, cysteine 35-cysteine 56, cysteine 42-cysteine 63, and cysteine 46-cysteine 65.

This sequence belongs to the long (4 C-C) scorpion toxin superfamily. Sodium channel inhibitor family. Beta subfamily. In terms of tissue distribution, expressed by the venom gland.

It localises to the secreted. Functionally, depressant insect beta-toxins cause a transient contraction paralysis followed by a slow flaccid paralysis. They bind voltage-independently at site-4 of sodium channels and shift the voltage of activation toward more negative potentials thereby affecting sodium channel activation and promoting spontaneous and repetitive firing. Aside from typical beta-toxin effects, this toxin also affects the inactivation process and ion selectivity of the insect voltage-gated sodium channel. This toxin is active only on insects. Is active on the insect voltage-gated sodium channel para. In vivo, when injected intraperitoneally, it exhibits analgesic activity, increasing hot plate and tail flick withdrawal latencies in a dose-dependent fashion. This phenomenon might be partly due to an inhibitory mechanism activated by noxious stimuli. The protein is Beta-insect depressant toxin LqqIT2 of Leiurus quinquestriatus quinquestriatus (Egyptian scorpion).